The chain runs to 129 residues: Small ribosomal subunit protein uS12 (129 aa).

Residues 1-25 (MPTYNQLVRFGRKSKTRKTKSPALE) are disordered. Basic residues predominate over residues 10–20 (FGRKSKTRKTK). At D89 the chain carries 3-methylthioaspartic acid. The disordered stretch occupies residues 109-129 (GRKQGRSRYGTPRKQVAVTKK).

It belongs to the universal ribosomal protein uS12 family. In terms of assembly, part of the 30S ribosomal subunit. Contacts proteins S8 and S17. May interact with IF1 in the 30S initiation complex.

Functionally, with S4 and S5 plays an important role in translational accuracy. In terms of biological role, interacts with and stabilizes bases of the 16S rRNA that are involved in tRNA selection in the A site and with the mRNA backbone. Located at the interface of the 30S and 50S subunits, it traverses the body of the 30S subunit contacting proteins on the other side and probably holding the rRNA structure together. The combined cluster of proteins S8, S12 and S17 appears to hold together the shoulder and platform of the 30S subunit. This chain is Small ribosomal subunit protein uS12, found in Rickettsia peacockii (strain Rustic).